Here is a 777-residue protein sequence, read N- to C-terminus: Hepatocyte growth factor-regulated tyrosine kinase substrate (777 aa).

The 129-residue stretch at 15–143 (ATSQLLLETD…IMKVEGHVFP (129 aa)) folds into the VHS domain. The segment at 160–220 (WVDAEECHRC…VCEPCYEQLN (61 aa)) adopts an FYVE-type zinc-finger fold. Cys-166, Cys-169, Cys-182, Cys-185, Cys-190, and Cys-193 together coordinate Zn(2+). Lys-207 carries the N6-acetyllysine modification. Cys-212 and Cys-215 together coordinate Zn(2+). Tyr-216 carries the post-translational modification Phosphotyrosine. The disordered stretch occupies residues 223-319 (AEGKATSTTE…SPVNSSAPLA (97 aa)). Residues 225 to 543 (GKATSTTELP…QRLQEQEKER (319 aa)) are interaction with SNX1. A UIM domain is found at 258–277 (QEEEELQLALALSQSEAEEK). Over residues 290-311 (PKAEPMPSASSAPPASSLYSSP) the composition is skewed to low complexity. Residues Tyr-308, Tyr-329, and Tyr-334 each carry the phosphotyrosine modification. A disordered region spans residues 338 to 407 (KQEEARKSPT…NGESEESHEQ (70 aa)). The segment at 445–543 (SINGMHPQLL…QRLQEQEKER (99 aa)) is interaction with SNAP25 and TRAK2. The segment at 454–572 (LELLNQLDER…FPLPYAQLQA (119 aa)) is interaction with STAM. An interaction with NF2 region spans residues 480-777 (ARGALSALRE…GSEAQLISFD (298 aa)). N6-succinyllysine is present on Lys-551. The tract at residues 718–777 (LPSQDASLPPQQPYIAGQQPMYQQMAPSGGPPQQQPPVAQQPQAQGPPAQGSEAQLISFD) is disordered. Positions 753-768 (PPVAQQPQAQGPPAQG) are enriched in low complexity.

As to quaternary structure, component of the ESCRT-0 complex composed of STAM or STAM2 and HGS. Part of a complex at least composed of HSG, STAM2 (or probably STAM) and EPS15. Interacts with STAM. Interacts with STAM2. Interacts with EPS15; the interaction is direct, calcium-dependent and inhibited by SNAP25. Identified in a complex with STAM and LITAF. Found in a complex with STAM and E3 ligase ITCH and DTX3L. Interacts with E3 ligase DTX3L; the interaction brings together STAM and HSG, promotes their recruitment to early endosomes and decreases STAM and HGS ubiquitination by ITCH. Interacts with NF2; the interaction is direct. Interacts with ubiquitin; the interaction is direct. Interacts with VPS37C. Interacts with SMAD1, SMAD2 and SMAD3. Interacts with TSG101; the interaction mediates the association with the ESCRT-I complex. Interacts with SNAP25; the interaction is direct and decreases with addition of increasing concentrations of free calcium. Interacts with SNX1; the interaction is direct. Component of a 550 kDa membrane complex at least composed of HGS and SNX1 but excluding EGFR. Interacts with TRAK1. Interacts with TRAK2. Component of the CART complex, at least composed of ACTN4, HGS/HRS, MYO5B and TRIM3. Interacts (via UIM domain) with UBQLN1 (via ubiquitin-like domain). Interacts with ARRDC3. Identified in a complex containing at least ARRDC4, AVPR2 and HGS. Interacts with LAPTM4B; promotes HGS ubiquitination. Phosphorylated on Tyr-334. A minor site of phosphorylation on Tyr-329 is detected. Phosphorylation occurs in response to EGF, IL-2, GM-CSF and HGF. Post-translationally, ubiquitinated. Ubiquitinated by ITCH. As to expression, ubiquitous expression in adult and fetal tissues with higher expression in testis and peripheral blood leukocytes.

The protein resides in the cytoplasm. It localises to the early endosome membrane. It is found in the endosome. Its subcellular location is the multivesicular body membrane. Functionally, involved in intracellular signal transduction mediated by cytokines and growth factors. When associated with STAM, it suppresses DNA signaling upon stimulation by IL-2 and GM-CSF. Could be a direct effector of PI3-kinase in vesicular pathway via early endosomes and may regulate trafficking to early and late endosomes by recruiting clathrin. May concentrate ubiquitinated receptors within clathrin-coated regions. Involved in down-regulation of receptor tyrosine kinase via multivesicular body (MVBs) when complexed with STAM (ESCRT-0 complex). The ESCRT-0 complex binds ubiquitin and acts as a sorting machinery that recognizes ubiquitinated receptors and transfers them to further sequential lysosomal sorting/trafficking processes. May contribute to the efficient recruitment of SMADs to the activin receptor complex. Involved in receptor recycling via its association with the CART complex, a multiprotein complex required for efficient transferrin receptor recycling but not for EGFR degradation. The chain is Hepatocyte growth factor-regulated tyrosine kinase substrate (HGS) from Homo sapiens (Human).